Here is a 287-residue protein sequence, read N- to C-terminus: Syntaxin-11 (287 aa).

Positions Leu-41–Arg-71 form a coiled coil. One can recognise a t-SNARE coiled-coil homology domain in the interval Leu-204 to Ala-266.

It belongs to the syntaxin family. Interacts with the SNARE proteins SNAP-23 and VAMP.

Its subcellular location is the membrane. The protein localises to the golgi apparatus. It is found in the trans-Golgi network membrane. Its function is as follows. SNARE that acts to regulate protein transport between late endosomes and the trans-Golgi network. The sequence is that of Syntaxin-11 (STX11) from Homo sapiens (Human).